The primary structure comprises 330 residues: MTNKIVFPEPKQQVDFAFSLKRFRGIYLQNALLETVRDMDIVALDTQLAEYVNKADLATLATYGLRAELLFPVPVLLETNPFLLGYYRLLMGYSQKEFYGKDKGFNAGCFKSMEVKGNIGKVAKPKISELCHAFCSVASSLLQGVGPLRISRELLDDLTLLTVGPQLRGGANNQRGADGIVLVFEIIKEIVSHAVAEVRENAIEVNSATGRNVLIEFAPDPDIIIREEMSLDNYRNVVAIEVKSGTDVSNIHNRIGEAEKSHQKARGHGYTECWTVVNVSRLDMDKARKESPSTNRFYSITDLSLREGEQYEDFRRRVLSLTAISAAPTP.

It belongs to the XcyI type II restriction endonuclease family. It depends on Mg(2+) as a cofactor.

The catalysed reaction is Endonucleolytic cleavage of DNA to give specific double-stranded fragments with terminal 5'-phosphates.. Its function is as follows. An E and P subtype restriction enzyme that recognizes the double-stranded sequence 5'-CCCGGG-3' and cleaves after C-1. The sequence is that of Type II restriction enzyme Cfr9I (cfr9IR) from Citrobacter freundii.